The following is a 226-amino-acid chain: UPF0173 metal-dependent hydrolase GFO_2312 (226 aa).

It belongs to the UPF0173 family.

The sequence is that of UPF0173 metal-dependent hydrolase GFO_2312 from Christiangramia forsetii (strain DSM 17595 / CGMCC 1.15422 / KT0803) (Gramella forsetii).